We begin with the raw amino-acid sequence, 485 residues long: MKKQPKMTAIALILSGISGLAYGHGYVSAVENGVAEGRVTLCKFAANGTGEKNTHCGAIQYEPQSVEGPDGFPVTGPRDGKIASAESALAAALDEQTADRWVKRPIQAGPQTFEWTFTANHVTKDWKYYITKPNWNPNQPLSRDAFDLNPFCVVEGNMVQPPKRVNHECIVPEREGYQVILAVWDVGDTAASFYNVIDVKFDGNGPVLPDWNPAGQIIPSMDLSIGDTVYTRVFDNEGENPAYRTELKIDSETLTKANQWSYALATKINQTQKQQRAGQLNGDQFVPVYGTNPIYLKEGSGLKSVEIGYQIEAPQPEYSLTVSGLAKEYEIGEQPIQLDLTLEAQGEMSAELTVYNHHQKPLASWSQAMTDGELKSVTLELSEAKAGHHMLVSRIKDRDGNLQDQQTLDFMLVEPQTPPTPGDYDFVFPNGLKEYVAGTKVLASDGAIYQCKPWPYSGYCQQWTSNATQYQPGTGSHWEMAWDKH.

The signal sequence occupies residues 1 to 23 (MKKQPKMTAIALILSGISGLAYG). Residues 24–201 (HGYVSAVENG…SFYNVIDVKF (178 aa)) enclose the Chitin-binding type-4 domain. A Chitin-binding type-3 domain is found at 437–478 (AGTKVLASDGAIYQCKPWPYSGYCQQWTSNATQYQPGTGSHW).

Belongs to the GbpA family.

It localises to the secreted. Its function is as follows. Probably interacts with GlcNAc residues. May promote attachment to both epithelial cell surfaces and chitin. In Vibrio cholerae serotype O1 (strain M66-2), this protein is GlcNAc-binding protein A.